The primary structure comprises 368 residues: Zinc finger protein 24 (368 aa).

Lys22 is covalently cross-linked (Glycyl lysine isopeptide (Lys-Gly) (interchain with G-Cter in SUMO2)). Lys27 participates in a covalent cross-link: Glycyl lysine isopeptide (Lys-Gly) (interchain with G-Cter in SUMO1); alternate. Lys27 participates in a covalent cross-link: Glycyl lysine isopeptide (Lys-Gly) (interchain with G-Cter in SUMO2); alternate. Positions 52 to 134 (RQRFRQFGYQ…TVLEDLESEL (83 aa)) constitute an SCAN box domain. 2 positions are modified to phosphoserine: Ser132 and Ser142. Glycyl lysine isopeptide (Lys-Gly) (interchain with G-Cter in SUMO2) cross-links involve residues Lys147, Lys177, and Lys236. The segment at 251 to 273 (HICDECGKHFSQGSALILHQRIH) adopts a C2H2-type 1 zinc-finger fold. The interval 251–301 (HICDECGKHFSQGSALILHQRIHSGEKPYGCVECGKAFSRSSILVQHQRVH) is necessary and sufficient for nuclear localization. At Ser274 the chain carries Phosphoserine. Residues Lys277 and Lys286 each participate in a glycyl lysine isopeptide (Lys-Gly) (interchain with G-Cter in SUMO2) cross-link. C2H2-type zinc fingers lie at residues 279–301 (YGCV…QRVH), 307–329 (YKCL…QRIH), and 335–357 (YECV…QRRH). Ser292 bears the Phosphoserine mark. Tyr335 is subject to Phosphotyrosine. Residues Lys361 and Lys367 each participate in a glycyl lysine isopeptide (Lys-Gly) (interchain with G-Cter in SUMO2) cross-link.

The protein belongs to the krueppel C2H2-type zinc-finger protein family. Sumoylated. In terms of tissue distribution, expressed in many tissues except in heart.

The protein localises to the nucleus. In terms of biological role, transcription factor required for myelination of differentiated oligodendrocytes. Required for the conversion of oligodendrocytes from the premyelinating to the myelinating state. In the developing central nervous system (CNS), involved in the maintenance in the progenitor stage by promoting the cell cycle. Specifically binds to the 5'-TCAT-3' DNA sequence. Has transcription repressor activity in vitro. This Homo sapiens (Human) protein is Zinc finger protein 24 (ZNF24).